A 342-amino-acid chain; its full sequence is Cathepsin B-like cysteine proteinase 2 (342 aa).

The signal sequence occupies residues 1–18 (MKYLVLALCTYLCSQSGA). Positions 19–86 (DENAAQGIPL…VKEDPDPEVD (68 aa)) are cleaved as a propeptide — activation peptide. N-linked (GlcNAc...) asparagine glycosylation is present at Asn99. Disulfide bonds link Cys100/Cys128, Cys111/Cys156, Cys147/Cys214, Cys148/Cys152, Cys185/Cys218, and Cys193/Cys205. Residue Cys114 is part of the active site. The N-linked (GlcNAc...) asparagine glycan is linked to Asn138. N-linked (GlcNAc...) asparagine glycosylation is present at Asn198. His285 is an active-site residue. N-linked (GlcNAc...) asparagine glycosylation is present at Asn296. Residue Asn305 is part of the active site.

The protein belongs to the peptidase C1 family.

In terms of biological role, expression of the protease correlates with blood-feeding and suggests a role for the protease in blood digestion. The chain is Cathepsin B-like cysteine proteinase 2 (AC-2) from Haemonchus contortus (Barber pole worm).